Reading from the N-terminus, the 422-residue chain is UDP-N-acetylglucosamine 1-carboxyvinyltransferase (422 aa).

22–23 serves as a coordination point for phosphoenolpyruvate; the sequence is KN. Arg95 provides a ligand contact to UDP-N-acetyl-alpha-D-glucosamine. Cys119 functions as the Proton donor in the catalytic mechanism. Cys119 is subject to 2-(S-cysteinyl)pyruvic acid O-phosphothioketal. UDP-N-acetyl-alpha-D-glucosamine contacts are provided by residues 124–128, Asp309, and Val331; that span reads RPIDQ.

Belongs to the EPSP synthase family. MurA subfamily.

It localises to the cytoplasm. The enzyme catalyses phosphoenolpyruvate + UDP-N-acetyl-alpha-D-glucosamine = UDP-N-acetyl-3-O-(1-carboxyvinyl)-alpha-D-glucosamine + phosphate. The protein operates within cell wall biogenesis; peptidoglycan biosynthesis. Functionally, cell wall formation. Adds enolpyruvyl to UDP-N-acetylglucosamine. This Anaeromyxobacter dehalogenans (strain 2CP-C) protein is UDP-N-acetylglucosamine 1-carboxyvinyltransferase.